Here is a 1616-residue protein sequence, read N- to C-terminus: Putative inactive phenolphthiocerol synthesis polyketide synthase type I Pks1 (1616 aa).

The acyltransferase stretch occupies residues threonine 83 to valine 397. Serine 174 (for acyltransferase activity) is an active-site residue. Positions histidine 445 to threonine 567 are N-terminal hotdog fold. The tract at residues histidine 445–leucine 605 is dehydratase. Positions histidine 445–arginine 719 constitute a PKS/mFAS DH domain. Histidine 477 (proton acceptor; for dehydratase activity) is an active-site residue. The interval alanine 579–arginine 719 is C-terminal hotdog fold. Aspartate 640 functions as the Proton donor; for dehydratase activity in the catalytic mechanism. Residues glycine 910–leucine 1215 form an enoylreductase region. NADP(+) contacts are provided by residues valine 1040–alanine 1057 and threonine 1229–alanine 1244. Residues glycine 1228–proline 1409 are beta-ketoacyl reductase. The Carrier domain occupies glutamate 1514–methionine 1589. Serine 1549 carries the post-translational modification O-(pantetheine 4'-phosphoryl)serine. Residues glutamine 1588–valine 1604 are compositionally biased toward polar residues. Residues glutamine 1588–alanine 1616 form a disordered region.

The cofactor is pantetheine 4'-phosphate.

The protein operates within lipid metabolism; fatty acid biosynthesis. Functionally, may play a role in phthiocerol biosynthesis. This is Putative inactive phenolphthiocerol synthesis polyketide synthase type I Pks1 (pks1) from Mycobacterium tuberculosis (strain ATCC 25618 / H37Rv).